The sequence spans 425 residues: Glutamate-1-semialdehyde 2,1-aminomutase (425 aa).

At Lys-264 the chain carries N6-(pyridoxal phosphate)lysine.

It belongs to the class-III pyridoxal-phosphate-dependent aminotransferase family. HemL subfamily. Homodimer. It depends on pyridoxal 5'-phosphate as a cofactor.

The protein resides in the cytoplasm. It carries out the reaction (S)-4-amino-5-oxopentanoate = 5-aminolevulinate. Its pathway is porphyrin-containing compound metabolism; protoporphyrin-IX biosynthesis; 5-aminolevulinate from L-glutamyl-tRNA(Glu): step 2/2. In Hydrogenobaculum sp. (strain Y04AAS1), this protein is Glutamate-1-semialdehyde 2,1-aminomutase.